Reading from the N-terminus, the 227-residue chain is Phosphoribosylformylglycinamidine synthase subunit PurQ (227 aa).

Residues 3-225 enclose the Glutamine amidotransferase type-1 domain; sequence FAVIVFPGSN…LKQWRETYVV (223 aa). Cys-86 acts as the Nucleophile in catalysis. Residues His-194 and Glu-196 contribute to the active site.

As to quaternary structure, part of the FGAM synthase complex composed of 1 PurL, 1 PurQ and 2 PurS subunits.

The protein resides in the cytoplasm. It carries out the reaction N(2)-formyl-N(1)-(5-phospho-beta-D-ribosyl)glycinamide + L-glutamine + ATP + H2O = 2-formamido-N(1)-(5-O-phospho-beta-D-ribosyl)acetamidine + L-glutamate + ADP + phosphate + H(+). The catalysed reaction is L-glutamine + H2O = L-glutamate + NH4(+). Its pathway is purine metabolism; IMP biosynthesis via de novo pathway; 5-amino-1-(5-phospho-D-ribosyl)imidazole from N(2)-formyl-N(1)-(5-phospho-D-ribosyl)glycinamide: step 1/2. In terms of biological role, part of the phosphoribosylformylglycinamidine synthase complex involved in the purines biosynthetic pathway. Catalyzes the ATP-dependent conversion of formylglycinamide ribonucleotide (FGAR) and glutamine to yield formylglycinamidine ribonucleotide (FGAM) and glutamate. The FGAM synthase complex is composed of three subunits. PurQ produces an ammonia molecule by converting glutamine to glutamate. PurL transfers the ammonia molecule to FGAR to form FGAM in an ATP-dependent manner. PurS interacts with PurQ and PurL and is thought to assist in the transfer of the ammonia molecule from PurQ to PurL. The protein is Phosphoribosylformylglycinamidine synthase subunit PurQ of Bacillus cereus (strain 03BB102).